The primary structure comprises 438 residues: Serine--tRNA ligase (438 aa).

Residue 235–237 (TAE) participates in L-serine binding. ATP-binding positions include 266–268 (RKE) and Val-282. Glu-289 is a binding site for L-serine. Residue 355 to 358 (ELVS) coordinates ATP. Position 393 (Thr-393) interacts with L-serine.

It belongs to the class-II aminoacyl-tRNA synthetase family. Type-1 seryl-tRNA synthetase subfamily. In terms of assembly, homodimer. The tRNA molecule binds across the dimer.

It carries out the reaction tRNA(Ser) + L-serine + ATP = L-seryl-tRNA(Ser) + AMP + diphosphate + H(+). It catalyses the reaction tRNA(Sec) + L-serine + ATP = L-seryl-tRNA(Sec) + AMP + diphosphate + H(+). Its pathway is aminoacyl-tRNA biosynthesis; selenocysteinyl-tRNA(Sec) biosynthesis; L-seryl-tRNA(Sec) from L-serine and tRNA(Sec): step 1/1. Functionally, catalyzes the attachment of serine to tRNA(Ser). Is also able to aminoacylate tRNA(Sec) with serine, to form the misacylated tRNA L-seryl-tRNA(Sec), which will be further converted into selenocysteinyl-tRNA(Sec). The protein is Serine--tRNA ligase of Helianthus annuus (Common sunflower).